A 152-amino-acid chain; its full sequence is Small ribosomal subunit protein uS8m (152 aa).

The protein belongs to the universal ribosomal protein uS8 family. Component of the mitochondrial small ribosomal subunit (mt-SSU). Mature yeast 74S mitochondrial ribosomes consist of a small (37S) and a large (54S) subunit. The 37S small subunit contains a 15S ribosomal RNA (15S mt-rRNA) and at least 32 different proteins. The 54S large subunit contains a 21S rRNA (21S mt-rRNA) and at least 45 different proteins.

It is found in the mitochondrion. Functionally, component of the mitochondrial ribosome (mitoribosome), a dedicated translation machinery responsible for the synthesis of mitochondrial genome-encoded proteins, including at least some of the essential transmembrane subunits of the mitochondrial respiratory chain. The mitoribosomes are attached to the mitochondrial inner membrane and translation products are cotranslationally integrated into the membrane. This is Small ribosomal subunit protein uS8m (mrps8) from Schizosaccharomyces pombe (strain 972 / ATCC 24843) (Fission yeast).